A 164-amino-acid chain; its full sequence is CASP-like protein 1C2 (164 aa).

The Cytoplasmic segment spans residues 1–8; that stretch reads MVKLTQRL. Residues 9–29 form a helical membrane-spanning segment; that stretch reads GGLVLRFAAFCAALGAVIAMI. Residues 30–51 are Extracellular-facing; the sequence is TSRERSSFFVISLVAKYSDLAA. A helical membrane pass occupies residues 52–72; sequence FKYFVIANAIVTVYSFLVLFL. At 73–80 the chain is on the cytoplasmic side; sequence PKESLLWK. Residues 81–101 form a helical membrane-spanning segment; it reads FVVVLDLMVTMLLTSSLSAAV. At 102 to 129 the chain is on the extracellular side; sequence AVAQVGKRGNANAGWLPICGQVPRFCDQ. A helical transmembrane segment spans residues 130 to 150; it reads ITGALIAGLVALVLYVFLLIF. Residues 151 to 164 are Cytoplasmic-facing; sequence SIHHVVDPFLLRKS.

The protein belongs to the Casparian strip membrane proteins (CASP) family. In terms of assembly, homodimer and heterodimers.

Its subcellular location is the cell membrane. The sequence is that of CASP-like protein 1C2 from Arabidopsis thaliana (Mouse-ear cress).